The following is a 197-amino-acid chain: UPF0462 protein C4orf33 homolog (197 aa).

This sequence belongs to the UPF0462 family.

The chain is UPF0462 protein C4orf33 homolog from Danio rerio (Zebrafish).